We begin with the raw amino-acid sequence, 211 residues long: uncharacterized protein (211 aa).

Belongs to the nucleoside deoxyribosyltransferase family.

The protein resides in the cytoplasm. The protein localises to the nucleus. This is an uncharacterized protein from Schizosaccharomyces pombe (strain 972 / ATCC 24843) (Fission yeast).